Reading from the N-terminus, the 1241-residue chain is Putative urea carboxylase (1241 aa).

In terms of domain architecture, Biotin carboxylation spans 3 to 459 (ALKTLLIANR…LTKFLNNFEY (457 aa)). Positions 117 and 201 each coordinate ATP. In terms of domain architecture, ATP-grasp spans 121–321 (RELATKAGVP…LVELMLRQAD (201 aa)). The region spanning 1159–1239 (EELLKDPEIT…EAGKPLMLVR (81 aa)) is the Biotinyl-binding domain. N6-biotinyllysine is present on Lys-1202.

It depends on biotin as a cofactor.

It catalyses the reaction urea + hydrogencarbonate + ATP = urea-1-carboxylate + ADP + phosphate + H(+). In terms of biological role, involved in the utilization of lactams. Required for the conversion of exogenous 2-pyrrolidinone (gamma-butyrolactam) to endogenous gamma-amino-n-butyrate (GABA). In Emericella nidulans (strain FGSC A4 / ATCC 38163 / CBS 112.46 / NRRL 194 / M139) (Aspergillus nidulans), this protein is Putative urea carboxylase (lamA).